The following is a 341-amino-acid chain: GTP-binding protein GTR2 (341 aa).

5 residues coordinate GTP: S23, S24, S43, H124, and D127.

The protein belongs to the GTR/RAG GTP-binding protein family. Heterodimer; with GTR1. Component of the GSE complex composed of GTR1, GTR2, SLM4, MEH1 and LTV1. Component of the EGO complex, at least composed of GTR2, SLM4 and MEH1. Interacts with GTR1; the interaction is direct.

The protein localises to the vacuole membrane. It catalyses the reaction GTP + H2O = GDP + phosphate + H(+). Its function is as follows. GTPase involved in activation of the TORC1 signaling pathway, which promotes growth and represses autophagy in nutrient-rich conditions. Also required for TORC1 inactivation during nitrogen starvation. Required for intracellular sorting of GAP1 out of the endosome. Involved in the regulation of microautophagy. This chain is GTP-binding protein GTR2, found in Saccharomyces cerevisiae (strain ATCC 204508 / S288c) (Baker's yeast).